Reading from the N-terminus, the 283-residue chain is Rhomboid-like protease 2 (283 aa).

The segment covering 1 to 11 (MANIRTLSDYA) has biased composition (polar residues). A disordered region spans residues 1 to 26 (MANIRTLSDYASSPPRGSSALEGEVG). The next 3 helical transmembrane spans lie at 62-82 (IIIISFVQIAVYIASLAAGLA), 114-134 (ICPLFLHLNLFHILMNLWVQI), and 149-169 (LLAVYFGVGVLANMISAAVLF). Ser-178 acts as the Nucleophile in catalysis. The next 4 membrane-spanning stretches (helical) occupy residues 179 to 199 (TAVFALIGVQLAELALIWHAI), 205 to 225 (AIISVCICLFFVFVSSFGSHM), 227 to 247 (SVGHIGGLVMGFAAGIWLNEN), and 260 to 280 (LTSQVALAAAPILSCIFIFLV). His-230 is a catalytic residue.

This sequence belongs to the peptidase S54 family.

Its subcellular location is the membrane. It carries out the reaction Cleaves type-1 transmembrane domains using a catalytic dyad composed of serine and histidine that are contributed by different transmembrane domains.. In terms of biological role, serine protease involved in intramembrane proteolysis and the subsequent release of polypeptides from their membrane anchors. The sequence is that of Rhomboid-like protease 2 (ROM2) from Toxoplasma gondii.